The sequence spans 703 residues: MLLSALLTSVGINLGLCFLFFTLYSILRKQPSNVTVYGPRLVKKDGKSQQSNEFNLERLLPTAGWVKRALEPTNDEILSNLGLDALVFIRVFVFSIRVFSFASVVGIFILLPVNYMGTEFEEFFDLPKKSMDNFSISNVNDGSNKLWIHFCAIYIFTAVVCSLLYYEHKYILTKRIAHLYSSKPQPQEFTVLVSGVPLVSGNSISETVENFFREYHSSSYLSHIVVHRTDKLKVLMNDAEKLYKKLTRVKSGSISRQKSRWGGFLGMFGNNVDVVDHYQKKLDKLEDDMRLKQSLLAGEEVPAAFVSFRTRHGAAIATNIQQGIDPTQWLTEAAPEPEDVHWPFFTASFVRRWISNVVVLVAFVALLILYIVPVVLVQGLANLHQLETWFPFLKGILNMKIVSQVITGYLPSLIFQLFLLIVPPIMLLLSSMQGFISHSQIEKSACIKLLIFTVWNSFFANVLSGSALYRVNVFLEPKTIPRVLAAAVPAQASFFVSYVVTSGWTGLSSEILRLVPLLWSFITKLFGKEDDKEFEVPSTPFCQEIPRILFFGLLGITYFFLSPLILPFLLVYYCLGYIIYRNQLLNVYAAKYETGGKFWPIVHSYTIFSLVLMHIIAVGLFGLKELPVASSLTIPLPVLTVLFSIYCQRRFLPNFKSYPTQCLVNKDKADEREQNMSEFYSELVVAYRDPALSASQDSRDISP.

At 1–3 (MLL) the chain is on the extracellular side. Residues 4–26 (SALLTSVGINLGLCFLFFTLYSI) form a helical membrane-spanning segment. Topologically, residues 27 to 81 (LRKQPSNVTVYGPRLVKKDGKSQQSNEFNLERLLPTAGWVKRALEPTNDEILSNL) are cytoplasmic. The chain crosses the membrane as a helical span at residues 82–115 (GLDALVFIRVFVFSIRVFSFASVVGIFILLPVNY). Residues 116-143 (MGTEFEEFFDLPKKSMDNFSISNVNDGS) lie on the Extracellular side of the membrane. The chain crosses the membrane as a helical span at residues 144–165 (NKLWIHFCAIYIFTAVVCSLLY). Residues 166-355 (YEHKYILTKR…TASFVRRWIS (190 aa)) are Cytoplasmic-facing. A coiled-coil region spans residues 228-300 (RTDKLKVLMN…LKQSLLAGEE (73 aa)). Residues 356 to 382 (NVVVLVAFVALLILYIVPVVLVQGLAN) form a helical membrane-spanning segment. Over 383 to 410 (LHQLETWFPFLKGILNMKIVSQVITGYL) the chain is Extracellular. Residues 411–432 (PSLIFQLFLLIVPPIMLLLSSM) form a helical membrane-spanning segment. Topologically, residues 433–436 (QGFI) are cytoplasmic. The chain crosses the membrane as a helical span at residues 437–463 (SHSQIEKSACIKLLIFTVWNSFFANVL). The Extracellular segment spans residues 464–489 (SGSALYRVNVFLEPKTIPRVLAAAVP). Residues 490–512 (AQASFFVSYVVTSGWTGLSSEIL) form a helical membrane-spanning segment. Residues 513-540 (RLVPLLWSFITKLFGKEDDKEFEVPSTP) are Cytoplasmic-facing. The helical transmembrane segment at 541 to 561 (FCQEIPRILFFGLLGITYFFL) threads the bilayer. A topological domain (extracellular) is located at residue serine 562. A helical transmembrane segment spans residues 563–586 (PLILPFLLVYYCLGYIIYRNQLLN). The Cytoplasmic portion of the chain corresponds to 587-598 (VYAAKYETGGKF). A helical transmembrane segment spans residues 599–623 (WPIVHSYTIFSLVLMHIIAVGLFGL). Residues 624 to 626 (KEL) lie on the Extracellular side of the membrane. The helical transmembrane segment at 627 to 655 (PVASSLTIPLPVLTVLFSIYCQRRFLPNF) threads the bilayer. Over 656–703 (KSYPTQCLVNKDKADEREQNMSEFYSELVVAYRDPALSASQDSRDISP) the chain is Cytoplasmic.

Belongs to the CSC1 (TC 1.A.17) family. Homodimer.

The protein resides in the membrane. Its function is as follows. Acts as an osmosensitive calcium-permeable cation channel. This chain is Hyperosmolality-gated Ca2+ permeable channel 2.3, found in Arabidopsis thaliana (Mouse-ear cress).